The chain runs to 128 residues: MGIWQGQSRRKATGGKYKIVVKKHKKEMGRESAETHLTDDTKIKIVRVAGGNKKVKLLRTNYANVMDPKTNTCKKVSISNVVGNDANKHYIRRNIITKGAIIETEMGKAKVTSRPGQSGIVNAILINE.

This sequence belongs to the eukaryotic ribosomal protein eS8 family. In terms of assembly, part of the 30S ribosomal subunit.

The chain is Small ribosomal subunit protein eS8 from Methanococcus aeolicus (strain ATCC BAA-1280 / DSM 17508 / OCM 812 / Nankai-3).